A 156-amino-acid polypeptide reads, in one-letter code: Melatonin receptor type 1A (156 aa).

A run of 3 helical transmembrane segments spans residues 19-39 (LCYV…NLQT), 62-82 (TIAL…FCYL), and 115-135 (FVVF…GLIV).

It belongs to the G-protein coupled receptor 1 family. At least in the brain, more precisely in the pars tuberalis and the suprachiasmatic nucleus.

It is found in the cell membrane. In terms of biological role, high affinity receptor for melatonin. Likely to mediate the reproductive and circadian actions of melatonin. The activity of this receptor is mediated by pertussis toxin sensitive G proteins that inhibit adenylate cyclase activity. Possibly involved in sleep induction, by melatonin activation of the potassium channel KCNMA1/BK and the dissociation of G-beta and G-gamma subunits, thereby decreasing synaptic transmission. This Rattus norvegicus (Rat) protein is Melatonin receptor type 1A (Mtnr1a).